We begin with the raw amino-acid sequence, 689 residues long: Elongation factor G 1 (689 aa).

Residues 7–282 form the tr-type G domain; that stretch reads DQVRTIGIIS…AVVDFLPSPL (276 aa). Residues 16–23, 80–84, and 134–137 contribute to the GTP site; these read SHIDAGKT, DTPGH, and NKMD.

Belongs to the TRAFAC class translation factor GTPase superfamily. Classic translation factor GTPase family. EF-G/EF-2 subfamily.

Its subcellular location is the cytoplasm. Its function is as follows. Catalyzes the GTP-dependent ribosomal translocation step during translation elongation. During this step, the ribosome changes from the pre-translocational (PRE) to the post-translocational (POST) state as the newly formed A-site-bound peptidyl-tRNA and P-site-bound deacylated tRNA move to the P and E sites, respectively. Catalyzes the coordinated movement of the two tRNA molecules, the mRNA and conformational changes in the ribosome. The chain is Elongation factor G 1 from Geobacter sulfurreducens (strain ATCC 51573 / DSM 12127 / PCA).